Here is a 34-residue protein sequence, read N- to C-terminus: Conotoxin S4.3 (34 aa).

Position 1 is a pyrrolidone carboxylic acid (glutamine 1). Residue glutamate 3 is modified to 4-carboxyglutamate. An O-linked (HexNAc...) serine glycan is attached at serine 7. A glycan (O-linked (HexNAc...) threonine) is linked at threonine 9. 4-hydroxyproline occurs at positions 17, 22, 31, and 32.

Belongs to the conotoxin A superfamily. In terms of processing, contains 3 disulfide bonds. Expressed by the venom duct.

The protein localises to the secreted. In terms of biological role, probable neurotoxin with ion channel inhibitor activity. This Conus striatus (Striated cone) protein is Conotoxin S4.3.